Here is a 773-residue protein sequence, read N- to C-terminus: DNA polymerase (773 aa).

Positions 1 to 131 (MILDADYITE…IDRGLIPMEG (131 aa)) are N-terminal domain. The interval 133-385 (EELRMLAFDI…ELARRTESYA (253 aa)) is exonuclease domain. Mg(2+)-binding residues include aspartate 141, glutamate 143, and aspartate 315. The polymerase domain stretch occupies residues 390-773 (KEPEKGLWEN…GLGAWLKPKT (384 aa)). Intrachain disulfides connect cysteine 428/cysteine 442 and cysteine 506/cysteine 509.

The protein belongs to the DNA polymerase type-B family. Mg(2+) is required as a cofactor.

The enzyme catalyses DNA(n) + a 2'-deoxyribonucleoside 5'-triphosphate = DNA(n+1) + diphosphate. DNA polymerase activity strongly inhibited by uracil-containing oligonucleotides. Its function is as follows. Thermostable DNA polymerase. In addition to polymerase activity, this DNA polymerase exhibits 3' to 5' exonuclease activity. In Desulfurococcus sp. (strain Tok), this protein is DNA polymerase (pol).